A 576-amino-acid polypeptide reads, in one-letter code: Arginine--tRNA ligase (576 aa).

The 'HIGH' region signature appears at Pro-122–His-132.

It belongs to the class-I aminoacyl-tRNA synthetase family. As to quaternary structure, monomer.

The protein resides in the cytoplasm. The enzyme catalyses tRNA(Arg) + L-arginine + ATP = L-arginyl-tRNA(Arg) + AMP + diphosphate. In Yersinia pseudotuberculosis serotype IB (strain PB1/+), this protein is Arginine--tRNA ligase.